The following is an 84-amino-acid chain: uncharacterized protein (84 aa).

Transmembrane regions (helical) follow at residues 7–27 (HVNF…ILCI) and 52–72 (ITII…INPC).

The protein localises to the membrane. This is an uncharacterized protein from Saccharomyces cerevisiae (strain ATCC 204508 / S288c) (Baker's yeast).